The sequence spans 442 residues: Cation channel sperm-associated protein 4 (442 aa).

At 1 to 66 (MSEKHKWWQQ…TQMYIKQLLR (66 aa)) the chain is on the cytoplasmic side. Residues 67–88 (HPAFQLLLAFLLLSNAITIALR) form a helical membrane-spanning segment. Residues 89–98 (TNSYLGQKHY) lie on the Extracellular side of the membrane. Residues 99–125 (ELFSTIDDIVLTILICEVLLGWLNGFW) form a helical membrane-spanning segment. At 126-129 (IFWK) the chain is on the cytoplasmic side. Residues 130 to 153 (DGWNILNFAIVFILFMGFFIKQLD) traverse the membrane as a helical segment. Over 154-156 (MVA) the chain is Extracellular. Residues 157-175 (ITYPLRVLRLVHVCMAVEP) form a helical membrane-spanning segment. Topologically, residues 176 to 188 (LARIIKVILQSMP) are cytoplasmic. A helical membrane pass occupies residues 189 to 212 (DLANVMALILFFMLVFSVFGVTLF). The Extracellular portion of the chain corresponds to 213-222 (GAFVPKHFQN). Residues 223 to 234 (MGVALYTLFICI) constitute an intramembrane region (helical; Pore-forming). Residues 235 to 255 (TQDGWLDIYTDFQMDEREYAM) lie on the Extracellular side of the membrane. The helical transmembrane segment at 256 to 283 (EVGGAIYFAVFITLGAFIGLNLFVVVVT) threads the bilayer. Residues 284–442 (TNLEQMMKTG…NMVNKHKFSH (159 aa)) lie on the Cytoplasmic side of the membrane.

This sequence belongs to the cation channel sperm-associated (TC 1.A.1.19) family. As to quaternary structure, component of the CatSper complex or CatSpermasome composed of the core pore-forming members CATSPER1, CATSPER2, CATSPER3 and CATSPER4 as well as auxiliary members CATSPERB, CATSPERG2, CATSPERD, CATSPERE, CATSPERZ, C2CD6/CATSPERT, SLCO6C1, TMEM249, TMEM262 and EFCAB9. HSPA1 may be an additional auxiliary complex member. The core complex members CATSPER1, CATSPER2, CATSPER3 and CATSPER4 form a heterotetrameric channel. The auxiliary CATSPERB, CATSPERG2, CATSPERD and CATSPERE subunits form a pavilion-like structure over the pore which stabilizes the complex through interactions with CATSPER4, CATSPER3, CATSPER1 and CATSPER2 respectively. SLCO6C1 interacts with CATSPERE and TMEM262/CATSPERH interacts with CATSPERB, further stabilizing the complex. C2CD6/CATSPERT interacts at least with CATSPERD and is required for targeting the CatSper complex in the flagellar membrane. In terms of tissue distribution, testis-specific.

It is found in the cell projection. Its subcellular location is the cilium. It localises to the flagellum membrane. The enzyme catalyses Ca(2+)(in) = Ca(2+)(out). Its activity is regulated as follows. In contrast to the human ortholog, not activated by progesterone. Activated by intracellular alkalinization. Pore-forming subunit of the CatSper complex, a sperm-specific voltage-gated calcium channel that plays a central role in sperm cell hyperactivation. Controls calcium entry to mediate the hyperactivated motility, a step needed for sperm motility which is essential late in the preparation of sperm for fertilization. This chain is Cation channel sperm-associated protein 4 (Catsper4), found in Mus musculus (Mouse).